The following is a 1471-amino-acid chain: ABC multidrug transporter F (1471 aa).

Residues 1–19 (MALNSTDNRWSTGEDTPSE) are compositionally biased toward polar residues. The disordered stretch occupies residues 1–40 (MALNSTDNRWSTGEDTPSEAQLPDGEERLDAAPDEKVTAE). Asn4 carries an N-linked (GlcNAc...) asparagine glycan. A compositionally biased stretch (basic and acidic residues) spans 25–40 (GEERLDAAPDEKVTAE). Residues Asn71 and Asn311 are each glycosylated (N-linked (GlcNAc...) asparagine). Residues 133–387 (LKVPTMVRQA…FEQLGFQCPE (255 aa)) form the ABC transporter 1 domain. A helical membrane pass occupies residues 498 to 518 (VTLAMLIGNFFEALIIASIFY). N-linked (GlcNAc...) asparagine glycosylation is present at Asn519. A run of 5 helical transmembrane segments spans residues 532 to 552 (ALLF…ILTL), 578 to 598 (FIMS…TLYF), 607 to 627 (GPFF…SMFF), 641 to 661 (LAPS…TIPV), and 751 to 771 (IIIA…ELVA). The segment at 791–819 (RAKQGQRDEEQPSASAVPSEKYSEAPTPV) is disordered. Residues 829–1071 (FHWEDVCYDV…TLMDYFVRNG (243 aa)) enclose the ABC transporter 2 domain. An N-linked (GlcNAc...) asparagine glycan is attached at Asn842. Residue 865 to 872 (GVSGAGKT) coordinates ATP. 5 consecutive transmembrane segments (helical) span residues 1167 to 1187 (YLYS…FSFF), 1201 to 1221 (FGVF…IPTF), 1252 to 1272 (FAWN…PVGL), 1288 to 1308 (LVFL…HLLI), and 1326 to 1346 (IMMY…GFWI). Residues Asn1386, Asn1422, and Asn1429 are each glycosylated (N-linked (GlcNAc...) asparagine). Residues 1441 to 1461 (FGLLWVYVAVNTFGAVFLYWL) traverse the membrane as a helical segment.

It belongs to the ABC transporter superfamily. ABCG family. PDR (TC 3.A.1.205) subfamily.

Its subcellular location is the cell membrane. It catalyses the reaction fluconazole(in) + ATP + H2O = fluconazole(out) + ADP + phosphate + H(+). It carries out the reaction itraconazole(in) + ATP + H2O = itraconazole(out) + ADP + phosphate + H(+). With respect to regulation, the efflux inhibitor FK506 impairs the transport activity. Its function is as follows. Pleiotropic ABC efflux transporter that shows a strong substrate specificity for the azole class of drugs such as lotrimazole (CLT), fluconazole (FLC), itraconazole (ITC), ketoconazole (KTC), posaconazole (POS), econazole (ECON), metconazole (MET), miconazole (MCZ), prochloraz (PCLZ), and tebuconazole (TEBZ). In Aspergillus fumigatus (strain ATCC MYA-4609 / CBS 101355 / FGSC A1100 / Af293) (Neosartorya fumigata), this protein is ABC multidrug transporter F.